Here is a 376-residue protein sequence, read N- to C-terminus: Probable inactive protein kinase At3g63330 (376 aa).

The region spanning 1–370 (MVERGPTVYL…VDEALQHPYF (370 aa)) is the Protein kinase domain.

This sequence belongs to the protein kinase superfamily. Ser/Thr protein kinase family.

The polypeptide is Probable inactive protein kinase At3g63330 (Arabidopsis thaliana (Mouse-ear cress)).